Here is a 715-residue protein sequence, read N- to C-terminus: Fatty acid oxidation complex subunit alpha (715 aa).

The segment at 1 to 190 (MTTTSAFMLN…KAGLVDDVVP (190 aa)) is enoyl-CoA hydratase. The tract at residues 306–714 (GPLNSVGILG…FWTNGETDQG (409 aa)) is 3-hydroxyacyl-CoA dehydrogenase.

The protein in the N-terminal section; belongs to the enoyl-CoA hydratase/isomerase family. In the central section; belongs to the 3-hydroxyacyl-CoA dehydrogenase family. In terms of assembly, heterotetramer of two alpha chains (FadJ) and two beta chains (FadI).

The protein localises to the cytoplasm. The enzyme catalyses a (3S)-3-hydroxyacyl-CoA = a (2E)-enoyl-CoA + H2O. It catalyses the reaction a 4-saturated-(3S)-3-hydroxyacyl-CoA = a (3E)-enoyl-CoA + H2O. The catalysed reaction is a (3S)-3-hydroxyacyl-CoA + NAD(+) = a 3-oxoacyl-CoA + NADH + H(+). It carries out the reaction (3S)-3-hydroxybutanoyl-CoA = (3R)-3-hydroxybutanoyl-CoA. Its pathway is lipid metabolism; fatty acid beta-oxidation. Functionally, catalyzes the formation of a hydroxyacyl-CoA by addition of water on enoyl-CoA. Also exhibits 3-hydroxyacyl-CoA epimerase and 3-hydroxyacyl-CoA dehydrogenase activities. This Salmonella paratyphi A (strain ATCC 9150 / SARB42) protein is Fatty acid oxidation complex subunit alpha.